We begin with the raw amino-acid sequence, 236 residues long: Purine nucleoside phosphorylase DeoD-type (236 aa).

His-4 provides a ligand contact to a purine D-ribonucleoside. Phosphate-binding positions include Gly-20, Arg-24, Arg-43, and 87–90 (RVGT). A purine D-ribonucleoside-binding positions include 179-181 (EME) and 203-204 (SD). Catalysis depends on Asp-204, which acts as the Proton donor.

This sequence belongs to the PNP/UDP phosphorylase family. In terms of assembly, homohexamer; trimer of homodimers.

It catalyses the reaction a purine D-ribonucleoside + phosphate = a purine nucleobase + alpha-D-ribose 1-phosphate. The enzyme catalyses a purine 2'-deoxy-D-ribonucleoside + phosphate = a purine nucleobase + 2-deoxy-alpha-D-ribose 1-phosphate. In terms of biological role, catalyzes the reversible phosphorolytic breakdown of the N-glycosidic bond in the beta-(deoxy)ribonucleoside molecules, with the formation of the corresponding free purine bases and pentose-1-phosphate. The sequence is that of Purine nucleoside phosphorylase DeoD-type from Streptococcus thermophilus (strain ATCC BAA-491 / LMD-9).